Here is a 381-residue protein sequence, read N- to C-terminus: GDP-mannose transporter (381 aa).

The span at 1 to 12 (MSDDKKSDDYRV) shows a compositional bias: basic and acidic residues. Positions 1-28 (MSDDKKSDDYRVDMPSSRTSRAPSPIMR) are disordered. The Cytoplasmic portion of the chain corresponds to 1-36 (MSDDKKSDDYRVDMPSSRTSRAPSPIMRPALKSAPS). Residues 37-57 (LTENPMAAVLAYCASSILMTV) traverse the membrane as a helical segment. The Lumenal segment spans residues 58-67 (TNKYVLSGVD). The helical transmembrane segment at 68–88 (FNLNFFLLCVQSVVCVTAISI) threads the bilayer. At 89–107 (CKAAGLITYRDFNTDEAKK) the chain is on the cytoplasmic side. The helical transmembrane segment at 108 to 126 (WFPISLLLIGMIYTGTWAL) threads the bilayer. Residues 127–130 (KYLS) lie on the Lumenal side of the membrane. Residues 131-153 (IPVYTIFKNLTIILIAYGEVLWF) form a helical membrane-spanning segment. Residues 154–161 (GGSVTPMT) lie on the Cytoplasmic side of the membrane. The helical transmembrane segment at 162-184 (LFSFGLMVLSSIIAAWADIQHAL) threads the bilayer. Residues 185–199 (NSFGQQSEAANEALS) lie on the Lumenal side of the membrane. Residues 200–220 (TMHAGYLWMAFNCVCSATYLL) traverse the membrane as a helical segment. The Cytoplasmic portion of the chain corresponds to 221–242 (SMRKRIKLTNFKDYDTMYYNNL). Residues 243–263 (LTIPILLVASILVEDWSSANI) form a helical membrane-spanning segment. Residues 264 to 274 (QKNFPPEQRNT) lie on the Lumenal side of the membrane. Residues 275–295 (VIMVMVISGMSTVFISYTSAW) form a helical membrane-spanning segment. The Cytoplasmic segment spans residues 296-303 (AVRVTSST). The chain crosses the membrane as a helical span at residues 304 to 324 (TYSMVGALNKLPIAISGLVFF). Topologically, residues 325–327 (DAP) are lumenal. The helical transmembrane segment at 328–348 (VTFGSVSAIFVGFVSGIVYAV) threads the bilayer. At 349 to 381 (AKVRQNSKPKTVLPTTNIPLSASSRSMQDSLKA) the chain is on the cytoplasmic side.

This sequence belongs to the TPT transporter family. SLC35D subfamily. As to quaternary structure, homooligomer.

Its subcellular location is the golgi apparatus membrane. The protein resides in the cytoplasmic vesicle membrane. The protein localises to the endoplasmic reticulum membrane. In terms of biological role, involved in the import of GDP-mannose from the cytoplasm into the Golgi lumen. This is GDP-mannose transporter (VRG4) from Phaeosphaeria nodorum (strain SN15 / ATCC MYA-4574 / FGSC 10173) (Glume blotch fungus).